Here is a 775-residue protein sequence, read N- to C-terminus: Endothelin-converting enzyme-like 1 (775 aa).

Residues 1-61 (MEAPYSMTAH…LPRWNRREVC (61 aa)) are Cytoplasmic-facing. Residues 23 to 51 (CGTGGARGTSLPPGFPRSSGRSASGARSG) form a disordered region. The segment covering 32 to 51 (SLPPGFPRSSGRSASGARSG) has biased composition (low complexity). Residues 62–82 (LLSGLVFAAGLCAILAAMLAL) traverse the membrane as a helical; Signal-anchor for type II membrane protein segment. Topologically, residues 83–775 (KYLGPGAAGT…MNPVHKCSVW (693 aa)) are lumenal. The Peptidase M13 domain occupies 99 to 775 (GCPERKAFAR…MNPVHKCSVW (677 aa)). Disulfide bonds link C124/C760, C132/C720, C188/C441, and C649/C772. 2 N-linked (GlcNAc...) asparagine glycosylation sites follow: N255 and N322. Position 612 (H612) interacts with Zn(2+). The active site involves E613. A Zn(2+)-binding site is contributed by H616. N-linked (GlcNAc...) asparagine glycosylation is present at N656. E672 is a Zn(2+) binding site. Catalysis depends on D676, which acts as the Proton donor.

The protein belongs to the peptidase M13 family. Zn(2+) is required as a cofactor. Highly expressed in the CNS, in particular in neurons of the caudate putamen, diagonal band, the paraventricular nucleus of the thalamus, part of the hypothalamus, in cranial motor nuclei, inferior olive, and substantia gelatinosa of the spinal tract trigeminal nucleus. Not detected in cerebral cortex, hippocampus and cerebellum.

It localises to the membrane. Functionally, may contribute to the degradation of peptide hormones and be involved in the inactivation of neuronal peptides. Cleaves the synthetic substrate Z-Gly-Gly-Leu-pNA and releases pNA. May protect against C2-ceramide-induced apoptosis. This is Endothelin-converting enzyme-like 1 (Ecel1) from Rattus norvegicus (Rat).